A 359-amino-acid polypeptide reads, in one-letter code: Isopentenyl-diphosphate delta-isomerase (359 aa).

Residue 11-12 (RK) coordinates substrate. Residues serine 68, 69 to 71 (GMT), serine 99, and asparagine 127 contribute to the FMN site. A substrate-binding site is contributed by 99–101 (SQR). Glutamine 163 is a substrate binding site. Glutamate 164 contacts Mg(2+). FMN-binding positions include lysine 199, threonine 229, 278–280 (GIR), and 299–300 (AL).

Belongs to the IPP isomerase type 2 family. Homooctamer. Dimer of tetramers. FMN serves as cofactor. NADPH is required as a cofactor. Requires Mg(2+) as cofactor.

It localises to the cytoplasm. It catalyses the reaction isopentenyl diphosphate = dimethylallyl diphosphate. With respect to regulation, inhibited by 3,4-epoxy-3-methylbutyl diphosphate (EIPP). Its function is as follows. Involved in the biosynthesis of isoprenoids. Catalyzes the 1,3-allylic rearrangement of the homoallylic substrate isopentenyl (IPP) to its allylic isomer, dimethylallyl diphosphate (DMAPP). The protein is Isopentenyl-diphosphate delta-isomerase of Methanocaldococcus jannaschii (strain ATCC 43067 / DSM 2661 / JAL-1 / JCM 10045 / NBRC 100440) (Methanococcus jannaschii).